A 420-amino-acid chain; its full sequence is Histidine--tRNA ligase, chloroplastic (420 aa).

This sequence belongs to the class-II aminoacyl-tRNA synthetase family.

It localises to the plastid. Its subcellular location is the chloroplast. It catalyses the reaction tRNA(His) + L-histidine + ATP = L-histidyl-tRNA(His) + AMP + diphosphate + H(+). This Gracilaria tenuistipitata var. liui (Red alga) protein is Histidine--tRNA ligase, chloroplastic.